A 412-amino-acid polypeptide reads, in one-letter code: Gamma-glutamyl phosphate reductase (412 aa).

This sequence belongs to the gamma-glutamyl phosphate reductase family.

It is found in the cytoplasm. It carries out the reaction L-glutamate 5-semialdehyde + phosphate + NADP(+) = L-glutamyl 5-phosphate + NADPH + H(+). Its pathway is amino-acid biosynthesis; L-proline biosynthesis; L-glutamate 5-semialdehyde from L-glutamate: step 2/2. In terms of biological role, catalyzes the NADPH-dependent reduction of L-glutamate 5-phosphate into L-glutamate 5-semialdehyde and phosphate. The product spontaneously undergoes cyclization to form 1-pyrroline-5-carboxylate. In Bartonella bacilliformis (strain ATCC 35685 / KC583 / Herrer 020/F12,63), this protein is Gamma-glutamyl phosphate reductase.